A 123-amino-acid polypeptide reads, in one-letter code: MADPSPEIKAVARYIRMSPYKVRRVLNQIRGRTYADALILLEFMPYAACEPVRKVLRSAVANAEHNNGLDPRDLVISKAYADQGPTLKRFRPRAQGRAYPIRKRTCHITIAVRPIEPEAATAS.

The protein belongs to the universal ribosomal protein uL22 family. Part of the 50S ribosomal subunit.

This protein binds specifically to 23S rRNA; its binding is stimulated by other ribosomal proteins, e.g. L4, L17, and L20. It is important during the early stages of 50S assembly. It makes multiple contacts with different domains of the 23S rRNA in the assembled 50S subunit and ribosome. Its function is as follows. The globular domain of the protein is located near the polypeptide exit tunnel on the outside of the subunit, while an extended beta-hairpin is found that lines the wall of the exit tunnel in the center of the 70S ribosome. This is Large ribosomal subunit protein uL22 from Synechococcus sp. (strain JA-3-3Ab) (Cyanobacteria bacterium Yellowstone A-Prime).